The chain runs to 64 residues: UPF0434 protein Bmul_0750/BMULJ_02510 (64 aa).

Belongs to the UPF0434 family.

This Burkholderia multivorans (strain ATCC 17616 / 249) protein is UPF0434 protein Bmul_0750/BMULJ_02510.